The primary structure comprises 100 residues: Small ribosomal subunit protein bS21 (100 aa).

Basic and acidic residues predominate over residues 37–52 (EKPSEKKAREKAEAVR). The tract at residues 37–100 (EKPSEKKARE…GAGAGPRGPR (64 aa)) is disordered. Residues 53–62 (RARKLARKKL) show a composition bias toward basic residues. Residues 84 to 100 (GAAGAGAGAGAGPRGPR) are compositionally biased toward gly residues.

The protein belongs to the bacterial ribosomal protein bS21 family.

The sequence is that of Small ribosomal subunit protein bS21 from Rhodopseudomonas palustris (strain BisB5).